We begin with the raw amino-acid sequence, 292 residues long: MFKGVYTALITPFKNRAVDYTALAKLVEQQINGGIHGLVPCGTTGESATLSHEEHKAVIRTVVELVQGRVKVLAGTGSNCTEESTELTCYAEEVGADGALLITPYYNKPTQAGLIAHYTTVANHTKLPVVLYNVPGRTAVDMHADTVIALSKVSNIVAIKEATGNMERASQIHKGAGSSMTLISGDDATFLPFLSVGGQGVISVTTNLAPRLVRDLWDLWHNGQINEAREVHEQLLEINGLLFCETSPIPVKAGAAMLGLCHNELRLPMTAMSEANQAKLHRAMVKLNLLEE.

Pyruvate is bound at residue T44. Catalysis depends on Y132, which acts as the Proton donor/acceptor. K160 functions as the Schiff-base intermediate with substrate in the catalytic mechanism. I202 serves as a coordination point for pyruvate.

Belongs to the DapA family. As to quaternary structure, homotetramer; dimer of dimers.

It is found in the cytoplasm. It carries out the reaction L-aspartate 4-semialdehyde + pyruvate = (2S,4S)-4-hydroxy-2,3,4,5-tetrahydrodipicolinate + H2O + H(+). It functions in the pathway amino-acid biosynthesis; L-lysine biosynthesis via DAP pathway; (S)-tetrahydrodipicolinate from L-aspartate: step 3/4. In terms of biological role, catalyzes the condensation of (S)-aspartate-beta-semialdehyde [(S)-ASA] and pyruvate to 4-hydroxy-tetrahydrodipicolinate (HTPA). The chain is 4-hydroxy-tetrahydrodipicolinate synthase from Magnetococcus marinus (strain ATCC BAA-1437 / JCM 17883 / MC-1).